Consider the following 122-residue polypeptide: Large ribosomal subunit protein uL14 (122 aa).

The protein belongs to the universal ribosomal protein uL14 family. Part of the 50S ribosomal subunit. Forms a cluster with proteins L3 and L19. In the 70S ribosome, L14 and L19 interact and together make contacts with the 16S rRNA in bridges B5 and B8.

Binds to 23S rRNA. Forms part of two intersubunit bridges in the 70S ribosome. In Rickettsia typhi (strain ATCC VR-144 / Wilmington), this protein is Large ribosomal subunit protein uL14.